Reading from the N-terminus, the 323-residue chain is Peroxisome biogenesis protein 20 (323 aa).

A Glycyl cysteine thioester (Cys-Gly) (interchain with G-Cter in ubiquitin) cross-link involves residue C8. Residue K19 forms a Glycyl lysine isopeptide (Lys-Gly) (interchain with G-Cter in ubiquitin) linkage. 3 consecutive short sequence motifs (wxxxF/Y motif) follow at residues 89 to 93, 102 to 105, and 141 to 145; these read WSSEF, WVED, and WTQEF.

The protein belongs to the peroxisomal targeting signal receptor family. In terms of assembly, interacts (via WxxxF/Y and LVxEF motifs) with PEX14; promoting translocation through the PEX13-PEX14 docking complex. Interacts with PEX7. Monoubiquitinated at Cys-8 by PEX2 during PEX20 passage through the PEX2-PEX10-PEX12 retrotranslocation channel: monoubiquitination acts as a signal for PEX20 extraction and is required for proper export from peroxisomes and recycling. When PEX5 recycling is compromised, polyubiquitinated at Lys-19 by PEX10 during its passage through the retrotranslocation channel, leading to its degradation.

It is found in the cytoplasm. Its subcellular location is the cytosol. It localises to the peroxisome matrix. Its function is as follows. Coreceptor required for the peroxisomal import of proteins containing a C-terminal PTS2-type peroxisomal targeting signal, such as 3-oxoacyl-CoA thiolase. Acts via its interaction with PEX7, promoting association between PEX7 bound to cargo proteins and the PEX13-PEX14 docking complex. PEX20 along with PEX7 and PTS2-containing cargo proteins are tranlocated into peroxisomes by passing through the PEX13-PEX14 docking complex. PEX20 coreceptor is then retrotranslocated into the cytosol, leading to release of bound cargo in the peroxisome matrix, and reset for a subsequent peroxisome import cycle. Also mediates peroxisomal import of proteins that do not contain PTS1- or PTS2-type peroxisomal targeting signals, such as acyl-CoA oxidases (Aox) izozymes. Import of acyl-CoA oxidases (Aox) izozymes is independent of PEX7. Required for PEX7 ubiquitination. This Komagataella pastoris (Yeast) protein is Peroxisome biogenesis protein 20.